The chain runs to 231 residues: NADH-ubiquinone oxidoreductase chain 4 (231 aa).

Helical transmembrane passes span 1–21, 34–54, 61–80, 84–106, 118–138, and 169–189; these read PIAG…YGII, VFLP…LTCL, SLIA…AIMI, WGLS…LFCL, ILIL…WWLL, and TIIL…HMFL.

It belongs to the complex I subunit 4 family.

The protein resides in the mitochondrion membrane. It carries out the reaction a ubiquinone + NADH + 5 H(+)(in) = a ubiquinol + NAD(+) + 4 H(+)(out). Functionally, core subunit of the mitochondrial membrane respiratory chain NADH dehydrogenase (Complex I) that is believed to belong to the minimal assembly required for catalysis. Complex I functions in the transfer of electrons from NADH to the respiratory chain. The immediate electron acceptor for the enzyme is believed to be ubiquinone. This is NADH-ubiquinone oxidoreductase chain 4 (MT-ND4) from Porthidium nasutum (Hognosed pitviper).